The sequence spans 917 residues: Isoleucine--tRNA ligase (917 aa).

A 'HIGH' region motif is present at residues 59-69; that stretch reads PYANGHIHIGH. Glu-569 contacts L-isoleucyl-5'-AMP. Positions 610 to 614 match the 'KMSKS' region motif; it reads KMSKS. Position 613 (Lys-613) interacts with ATP. Positions 890, 893, 905, and 908 each coordinate Zn(2+).

The protein belongs to the class-I aminoacyl-tRNA synthetase family. IleS type 1 subfamily. In terms of assembly, monomer. Zn(2+) is required as a cofactor.

The protein localises to the cytoplasm. It catalyses the reaction tRNA(Ile) + L-isoleucine + ATP = L-isoleucyl-tRNA(Ile) + AMP + diphosphate. Catalyzes the attachment of isoleucine to tRNA(Ile). As IleRS can inadvertently accommodate and process structurally similar amino acids such as valine, to avoid such errors it has two additional distinct tRNA(Ile)-dependent editing activities. One activity is designated as 'pretransfer' editing and involves the hydrolysis of activated Val-AMP. The other activity is designated 'posttransfer' editing and involves deacylation of mischarged Val-tRNA(Ile). This is Isoleucine--tRNA ligase from Campylobacter jejuni subsp. jejuni serotype O:2 (strain ATCC 700819 / NCTC 11168).